The chain runs to 337 residues: Phenylalanine--tRNA ligase alpha subunit (337 aa).

E252 is a binding site for Mg(2+).

The protein belongs to the class-II aminoacyl-tRNA synthetase family. Phe-tRNA synthetase alpha subunit type 1 subfamily. In terms of assembly, tetramer of two alpha and two beta subunits. Mg(2+) serves as cofactor.

The protein localises to the cytoplasm. The enzyme catalyses tRNA(Phe) + L-phenylalanine + ATP = L-phenylalanyl-tRNA(Phe) + AMP + diphosphate + H(+). This Francisella tularensis subsp. tularensis (strain SCHU S4 / Schu 4) protein is Phenylalanine--tRNA ligase alpha subunit.